Here is a 422-residue protein sequence, read N- to C-terminus: Serine--tRNA ligase (422 aa).

Residue 229-231 coordinates L-serine; that stretch reads TAE. Position 260–262 (260–262) interacts with ATP; the sequence is RKE. Glu-283 serves as a coordination point for L-serine. Position 347–350 (347–350) interacts with ATP; sequence EISS. Residue Ser-383 coordinates L-serine.

This sequence belongs to the class-II aminoacyl-tRNA synthetase family. Type-1 seryl-tRNA synthetase subfamily. As to quaternary structure, homodimer. The tRNA molecule binds across the dimer.

It localises to the cytoplasm. It catalyses the reaction tRNA(Ser) + L-serine + ATP = L-seryl-tRNA(Ser) + AMP + diphosphate + H(+). The catalysed reaction is tRNA(Sec) + L-serine + ATP = L-seryl-tRNA(Sec) + AMP + diphosphate + H(+). The protein operates within aminoacyl-tRNA biosynthesis; selenocysteinyl-tRNA(Sec) biosynthesis; L-seryl-tRNA(Sec) from L-serine and tRNA(Sec): step 1/1. In terms of biological role, catalyzes the attachment of serine to tRNA(Ser). Is also able to aminoacylate tRNA(Sec) with serine, to form the misacylated tRNA L-seryl-tRNA(Sec), which will be further converted into selenocysteinyl-tRNA(Sec). This is Serine--tRNA ligase from Natranaerobius thermophilus (strain ATCC BAA-1301 / DSM 18059 / JW/NM-WN-LF).